A 148-amino-acid polypeptide reads, in one-letter code: uncharacterized protein (148 aa).

Positions 55–148 (KMRCGESGAG…RNQGQLYPQP (94 aa)) are disordered. Residues 68–104 (RSNSAEVSSSQPALASKSQSKWGPTSNNPRGALTTTE) are compositionally biased toward polar residues.

This is an uncharacterized protein from Homo sapiens (Human).